A 463-amino-acid chain; its full sequence is Membrane-bound lytic murein transglycosylase F (463 aa).

Residues 1–33 form the signal peptide; it reads MQSQDYKKRLKLQIIIILSIAVMSCGVPNVPTA. Residues 34–272 form a non-LT domain region; it reads LSSLLERESI…VLEDKYFGHI (239 aa). The tract at residues 273-463 is LT domain; the sequence is RQFDYVDSRA…LVWLDEQGKI (191 aa). E317 is a catalytic residue.

This sequence in the N-terminal section; belongs to the bacterial solute-binding protein 3 family. The protein in the C-terminal section; belongs to the transglycosylase Slt family.

It localises to the cell outer membrane. The catalysed reaction is Exolytic cleavage of the (1-&gt;4)-beta-glycosidic linkage between N-acetylmuramic acid (MurNAc) and N-acetylglucosamine (GlcNAc) residues in peptidoglycan, from either the reducing or the non-reducing ends of the peptidoglycan chains, with concomitant formation of a 1,6-anhydrobond in the MurNAc residue.. Murein-degrading enzyme that degrades murein glycan strands and insoluble, high-molecular weight murein sacculi, with the concomitant formation of a 1,6-anhydromuramoyl product. Lytic transglycosylases (LTs) play an integral role in the metabolism of the peptidoglycan (PG) sacculus. Their lytic action creates space within the PG sacculus to allow for its expansion as well as for the insertion of various structures such as secretion systems and flagella. This Alteromonas mediterranea (strain DSM 17117 / CIP 110805 / LMG 28347 / Deep ecotype) protein is Membrane-bound lytic murein transglycosylase F.